The following is a 460-amino-acid chain: Ribulose bisphosphate carboxylase large chain (460 aa).

Lys-4 is subject to N6,N6,N6-trimethyllysine. Positions 113 and 163 each coordinate substrate. The Proton acceptor role is filled by Lys-165. A substrate-binding site is contributed by Lys-167. Residues Lys-191, Asp-193, and Glu-194 each contribute to the Mg(2+) site. N6-carboxylysine is present on Lys-191. His-284 (proton acceptor) is an active-site residue. Substrate is bound by residues Arg-285, His-317, and Ser-369.

This sequence belongs to the RuBisCO large chain family. Type I subfamily. In terms of assembly, heterohexadecamer of 8 large chains and 8 small chains. The cofactor is Mg(2+).

Its subcellular location is the plastid. The protein resides in the chloroplast. It carries out the reaction 2 (2R)-3-phosphoglycerate + 2 H(+) = D-ribulose 1,5-bisphosphate + CO2 + H2O. The enzyme catalyses D-ribulose 1,5-bisphosphate + O2 = 2-phosphoglycolate + (2R)-3-phosphoglycerate + 2 H(+). Functionally, ruBisCO catalyzes two reactions: the carboxylation of D-ribulose 1,5-bisphosphate, the primary event in carbon dioxide fixation, as well as the oxidative fragmentation of the pentose substrate in the photorespiration process. Both reactions occur simultaneously and in competition at the same active site. In Cunninghamia lanceolata (China fir), this protein is Ribulose bisphosphate carboxylase large chain.